Consider the following 485-residue polypeptide: Cytosol non-specific dipeptidase (485 aa).

His76 serves as a coordination point for Zn(2+). The active site involves Asp78. Residue Asp115 participates in Zn(2+) binding. Glu145 functions as the Proton acceptor in the catalytic mechanism. Zn(2+) is bound by residues Glu146 and Asp169. Lys296 carries the N6-acetyllysine modification. His457 lines the Zn(2+) pocket.

The protein belongs to the peptidase M20C family. Zn(2+) serves as cofactor. It depends on Co(2+) as a cofactor.

The catalysed reaction is Hydrolysis of dipeptides, preferentially hydrophobic dipeptides including prolyl amino acids.. With respect to regulation, inhibited by metal chelators. Functionally, dipeptidase with broad substrate specificity. Requires dipeptide substrates with an unblocked N-terminus and the amino group in the alpha or beta position. Non-protein amino acids and proline are not accepted in the C-terminal position, whereas some dipeptide amides and formyl amino acids are hydrolyzed. Also shows cysteinylglycinase activity, which is sufficient for E.coli to utilize cysteinylglycine as a cysteine source. This Escherichia coli (strain K12) protein is Cytosol non-specific dipeptidase (pepD).